The chain runs to 240 residues: Sugar fermentation stimulation protein homolog (240 aa).

It belongs to the SfsA family.

This is Sugar fermentation stimulation protein homolog from Natranaerobius thermophilus (strain ATCC BAA-1301 / DSM 18059 / JW/NM-WN-LF).